Here is a 911-residue protein sequence, read N- to C-terminus: Nitrate reductase [NADH], clone PBNBR1412 (911 aa).

Residues 53-72 (NDAVDDSYDSSDDEDESHNR) form a disordered region. Acidic residues predominate over residues 56–68 (VDDSYDSSDDEDE). C191 serves as a coordination point for Mo-molybdopterin. One can recognise a Cytochrome b5 heme-binding domain in the interval 539–614 (AKMYSMSEVR…LEDYRIGELI (76 aa)). Positions 574 and 597 each coordinate heme. The region spanning 654–766 (REKVPVTLIE…KGPLGHIEYL (113 aa)) is the FAD-binding FR-type domain. FAD is bound by residues 706-709 (RAYT), 723-727 (VVKVY), F728, F735, 740-742 (LMS), and T793.

Belongs to the nitrate reductase family. Homodimer. Requires FAD as cofactor. Heme is required as a cofactor. The cofactor is Mo-molybdopterin.

The enzyme catalyses nitrite + NAD(+) + H2O = nitrate + NADH + H(+). In terms of biological role, nitrate reductase is a key enzyme involved in the first step of nitrate assimilation in plants, fungi and bacteria. The chain is Nitrate reductase [NADH], clone PBNBR1412 (NIA2) from Brassica napus (Rape).